The chain runs to 421 residues: Phosphoribosylamine--glycine ligase (421 aa).

The ATP-grasp domain maps to K108–M314. I134–S195 contacts ATP. 2 residues coordinate Mg(2+): E284 and N286.

The protein belongs to the GARS family. The cofactor is Mg(2+). It depends on Mn(2+) as a cofactor.

It catalyses the reaction 5-phospho-beta-D-ribosylamine + glycine + ATP = N(1)-(5-phospho-beta-D-ribosyl)glycinamide + ADP + phosphate + H(+). It participates in purine metabolism; IMP biosynthesis via de novo pathway; N(1)-(5-phospho-D-ribosyl)glycinamide from 5-phospho-alpha-D-ribose 1-diphosphate: step 2/2. The chain is Phosphoribosylamine--glycine ligase from Streptococcus pyogenes serotype M6 (strain ATCC BAA-946 / MGAS10394).